A 212-amino-acid chain; its full sequence is Ribosomal RNA small subunit methyltransferase G (212 aa).

S-adenosyl-L-methionine is bound by residues Gly80, Leu85, 131 to 132 (AE), and Arg146.

The protein belongs to the methyltransferase superfamily. RNA methyltransferase RsmG family.

The protein localises to the cytoplasm. It catalyses the reaction guanosine(527) in 16S rRNA + S-adenosyl-L-methionine = N(7)-methylguanosine(527) in 16S rRNA + S-adenosyl-L-homocysteine. Specifically methylates the N7 position of guanine in position 527 of 16S rRNA. This Xanthomonas campestris pv. campestris (strain B100) protein is Ribosomal RNA small subunit methyltransferase G.